The following is a 297-amino-acid chain: tRNA(Ile)-lysidine synthase (297 aa).

ATP is bound at residue 16–21 (SGGSDS).

This sequence belongs to the tRNA(Ile)-lysidine synthase family.

It is found in the cytoplasm. The catalysed reaction is cytidine(34) in tRNA(Ile2) + L-lysine + ATP = lysidine(34) in tRNA(Ile2) + AMP + diphosphate + H(+). In terms of biological role, ligates lysine onto the cytidine present at position 34 of the AUA codon-specific tRNA(Ile) that contains the anticodon CAU, in an ATP-dependent manner. Cytidine is converted to lysidine, thus changing the amino acid specificity of the tRNA from methionine to isoleucine. The chain is tRNA(Ile)-lysidine synthase from Mesomycoplasma hyopneumoniae (strain 232) (Mycoplasma hyopneumoniae).